Here is a 185-residue protein sequence, read N- to C-terminus: Elongation factor P (185 aa).

The protein belongs to the elongation factor P family.

It is found in the cytoplasm. The protein operates within protein biosynthesis; polypeptide chain elongation. Its function is as follows. Involved in peptide bond synthesis. Stimulates efficient translation and peptide-bond synthesis on native or reconstituted 70S ribosomes in vitro. Probably functions indirectly by altering the affinity of the ribosome for aminoacyl-tRNA, thus increasing their reactivity as acceptors for peptidyl transferase. The chain is Elongation factor P from Streptococcus equi subsp. zooepidemicus (strain MGCS10565).